The sequence spans 495 residues: Glycerol kinase (495 aa).

Threonine 12 is an ADP binding site. ATP contacts are provided by threonine 12, threonine 13, and serine 14. Threonine 12 contacts sn-glycerol 3-phosphate. Arginine 16 contributes to the ADP binding site. The sn-glycerol 3-phosphate site is built by arginine 82, glutamate 83, tyrosine 134, and aspartate 243. Positions 82, 83, 134, 243, and 244 each coordinate glycerol. Positions 265 and 308 each coordinate ADP. Threonine 265, glycine 308, glutamine 312, and glycine 409 together coordinate ATP. ADP-binding residues include glycine 409 and asparagine 413.

This sequence belongs to the FGGY kinase family.

It catalyses the reaction glycerol + ATP = sn-glycerol 3-phosphate + ADP + H(+). The protein operates within polyol metabolism; glycerol degradation via glycerol kinase pathway; sn-glycerol 3-phosphate from glycerol: step 1/1. Its activity is regulated as follows. Inhibited by fructose 1,6-bisphosphate (FBP). Key enzyme in the regulation of glycerol uptake and metabolism. Catalyzes the phosphorylation of glycerol to yield sn-glycerol 3-phosphate. This is Glycerol kinase from Ectopseudomonas mendocina (strain ymp) (Pseudomonas mendocina).